Here is a 79-residue protein sequence, read N- to C-terminus: Acyl carrier protein (79 aa).

A Carrier domain is found at 2 to 77 (ESIEQRVKKI…QAVDYINSHG (76 aa)). The residue at position 37 (Ser37) is an O-(pantetheine 4'-phosphoryl)serine.

It belongs to the acyl carrier protein (ACP) family. Post-translationally, 4'-phosphopantetheine is transferred from CoA to a specific serine of apo-ACP by AcpS. This modification is essential for activity because fatty acids are bound in thioester linkage to the sulfhydryl of the prosthetic group.

It localises to the cytoplasm. It participates in lipid metabolism; fatty acid biosynthesis. Its function is as follows. Carrier of the growing fatty acid chain in fatty acid biosynthesis. This Bordetella parapertussis (strain 12822 / ATCC BAA-587 / NCTC 13253) protein is Acyl carrier protein.